Here is a 2121-residue protein sequence, read N- to C-terminus: Non-reducing polyketide synthase aoiG (2121 aa).

In terms of domain architecture, Starter acyltransferase (SAT) spans 5–258 (YIFGDQTVRV…LPVSIYAPYH (254 aa)). Residues 386–817 (SSKIAIIGFS…GGNTAVLVED (432 aa)) enclose the Ketosynthase family 3 (KS3) domain. Residues C558, H693, and H735 each act as for beta-ketoacyl synthase activity in the active site. Positions 921-1239 (FLFTGQGAQQ…LSVLHLAGVR (319 aa)) constitute a Malonyl-CoA:ACP transacylase (MAT) domain. The interval 1302–1433 (QKILEEEMTA…CTIELQRPHQ (132 aa)) is N-terminal hotdog fold. Residues 1302–1608 (QKILEEEMTA…FQKVARRVLE (307 aa)) enclose the PKS/mFAS DH domain. The active-site Proton acceptor; for dehydratase activity is H1334. Residues 1461-1608 (THKMRRGVAY…FQKVARRVLE (148 aa)) are C-terminal hotdog fold. D1519 acts as the Proton donor; for dehydratase activity in catalysis. In terms of domain architecture, Carrier 1 spans 1646–1723 (PHVEDAWQQV…SLRIYLNMSS (78 aa)). S1683 is subject to O-(pantetheine 4'-phosphoryl)serine. The segment covering 1728–1752 (DSIETSSYPTPDESTTTTITSPSGS) has biased composition (low complexity). The tract at residues 1728-1760 (DSIETSSYPTPDESTTTTITSPSGSDRNVGRNS) is disordered. Positions 1763–1840 (DGVGTTVGLV…AITAALHAIF (78 aa)) constitute a Carrier 2 domain. S1800 is subject to O-(pantetheine 4'-phosphoryl)serine. Residues 1872 to 1976 (TLFLFPDGSG…ILIDSPNPMG (105 aa)) form a TE/CLC (thioesterase/Claisen cyclase) domain region.

Pantetheine 4'-phosphate is required as a cofactor.

In terms of biological role, non-reducing polyketide synthase; part of the gene cluster that mediates the biosynthesis of a methylated derivative of known natural products orthosporin and diaporthin. AoiG catalyzes the biosynthesis of the hexaketide isocoumarin scaffold, via condensation of one acetyl-CoA starter unit with 6 malonyl-CoA units. An oxidoreductase that has still to be identified catalyzes the stereospecific reduction of the carbonyl moiety of the hexaketide isocoumarin scaffold to generate the S-configured secondary alcohol at C-11 of orthosporin. The methyltrasferase aoiF then catalyzes the biotransformation of not only orthosporin to diaporthin but also diaporthin to the final product, by performing a tandem methylation of the polyketide core. This chain is Non-reducing polyketide synthase aoiG, found in Aspergillus oryzae (strain ATCC 42149 / RIB 40) (Yellow koji mold).